The following is a 197-amino-acid chain: Phosphoheptose isomerase (197 aa).

One can recognise an SIS domain in the interval 37-197; the sequence is MLQCLMNDGK…CIDSVLLEGM (161 aa). 52–54 is a substrate binding site; sequence NGG. Zn(2+)-binding residues include H61 and E65. Substrate is bound by residues E65, 94–95, 120–122, S125, and Q175; these read ND and STS. The Zn(2+) site is built by Q175 and H183.

The protein belongs to the SIS family. GmhA subfamily. In terms of assembly, homotetramer. Requires Zn(2+) as cofactor.

It is found in the cytoplasm. It catalyses the reaction 2 D-sedoheptulose 7-phosphate = D-glycero-alpha-D-manno-heptose 7-phosphate + D-glycero-beta-D-manno-heptose 7-phosphate. The protein operates within carbohydrate biosynthesis; D-glycero-D-manno-heptose 7-phosphate biosynthesis; D-glycero-alpha-D-manno-heptose 7-phosphate and D-glycero-beta-D-manno-heptose 7-phosphate from sedoheptulose 7-phosphate: step 1/1. In terms of biological role, catalyzes the isomerization of sedoheptulose 7-phosphate in D-glycero-D-manno-heptose 7-phosphate. The polypeptide is Phosphoheptose isomerase (Neisseria meningitidis serogroup C (strain 053442)).